Consider the following 133-residue polypeptide: Small ribosomal subunit protein bS6 (133 aa).

The protein belongs to the bacterial ribosomal protein bS6 family.

In terms of biological role, binds together with bS18 to 16S ribosomal RNA. The polypeptide is Small ribosomal subunit protein bS6 (Chlorobium limicola (strain DSM 245 / NBRC 103803 / 6330)).